The sequence spans 549 residues: MSPSKMNATVGSTSEVEQKIRQELALSDEVTTIRRNAPAAVLYEDGLKENKTVISSSGALIAYSGVKTGRSPKDKRIVEEPTSKDEIWWGPVNKPCSERTWSINRERAADYLRTRDHIYIVDAFAGWDPKYRIKVRVVCARAYHALFMTNMLIRPTEEELAHFGEPDFTVWNAGQFPANLHTQDMSSKSTIEINFKAMEMIILGTEYAGEMKKGIFTVMFYLMPVHHNVLTLHSSANQGIQNGDVTLFFGLSGTGKTTLSADPHRLLIGDDEHCWSDHGVFNIEGGCYAKCINLSAEKEPEIFDAIKFGSVLENVIYDEKSHVVDYDDSSITENTRCAYPIDYIPSAKIPCLADSHPKNIILLTCDASGVLPPVSKLTPEQVMYHFISGYTSKMAGTEQGVTEPEPTFSSCFGQPFLALHPIRYATMLATKMSQHKANAYLINTGWTGSSYVSGGKRCPLKYTRAILDSIHDGSLANETYETLPIFNLQVPTKVNGVPAELLNPAKNWSQGESKYRGAVTNLANLFVQNFKIYQDRATPDVLAAGPQFE.

250 to 257 (GLSGTGKT) is a binding site for ATP.

The protein belongs to the phosphoenolpyruvate carboxykinase (ATP) family. Homotetramer.

The catalysed reaction is oxaloacetate + ATP = phosphoenolpyruvate + ADP + CO2. The protein operates within carbohydrate biosynthesis; gluconeogenesis. The protein is Phosphoenolpyruvate carboxykinase (ATP) (PCK1) of Saccharomyces cerevisiae (strain ATCC 204508 / S288c) (Baker's yeast).